We begin with the raw amino-acid sequence, 592 residues long: Aspartate--tRNA(Asp/Asn) ligase (592 aa).

Glu175 provides a ligand contact to L-aspartate. An aspartate region spans residues 199–202 (QLFK). Arg221 is an L-aspartate binding site. ATP is bound by residues 221 to 223 (RDE) and Gln230. Residue His447 coordinates L-aspartate. Glu481 serves as a coordination point for ATP. Residue Arg488 participates in L-aspartate binding. 533–536 (GIDR) is a binding site for ATP.

The protein belongs to the class-II aminoacyl-tRNA synthetase family. Type 1 subfamily. In terms of assembly, homodimer.

It localises to the cytoplasm. The catalysed reaction is tRNA(Asx) + L-aspartate + ATP = L-aspartyl-tRNA(Asx) + AMP + diphosphate. Its function is as follows. Aspartyl-tRNA synthetase with relaxed tRNA specificity since it is able to aspartylate not only its cognate tRNA(Asp) but also tRNA(Asn). Reaction proceeds in two steps: L-aspartate is first activated by ATP to form Asp-AMP and then transferred to the acceptor end of tRNA(Asp/Asn). The chain is Aspartate--tRNA(Asp/Asn) ligase from Dictyoglomus turgidum (strain DSM 6724 / Z-1310).